The chain runs to 375 residues: MAATAQYLPRNNSLPSNPLMHPDSDRMHQGTTYREVQKMMHQEYLQGLATNAGHPMSLTHHQWLPNPASDWGSGSHLGAQAEHGKSGVQSSREDLSSSFHHHRSHLVHQQTPSSHAWAQSGGHHLPPMSPGSNSHQPLIYSQSSYTNLNGMLGPQASSLHHSMRDPLHDDPGVLDTHVESPPQHLSHHQDHSDEDAPSSDDLEQFAKQFKQRRIKLGFTQADVGLALGTLYGNVFSQTTICRFEALQLSFKNMCKLKPLLNKWLEETDSTTGSPTNLDKIAAQGRKRKKRTSIEVGVKGALENHFLKCPKPSAHEITSLADSLQLEKEVVRVWFCNRRQKEKRMTPAGVPHPPMEDVYSQAETPPLHHTLQTSVQ.

3 disordered regions span residues 1–29 (MAAT…RMHQ), 56–139 (MSLT…QPLI), and 151–200 (MLGP…PSSD). Polar residues-rich tracts occupy residues 107–117 (VHQQTPSSHAW), 130–139 (PGSNSHQPLI), and 151–160 (MLGPQASSLH). Over residues 162 to 171 (SMRDPLHDDP) the composition is skewed to basic and acidic residues. Residues 194-268 (EDAPSSDDLE…LLNKWLEETD (75 aa)) form the POU-specific domain. A DNA-binding region (homeobox) is located at residues 286 to 345 (KRKKRTSIEVGVKGALENHFLKCPKPSAHEITSLADSLQLEKEVVRVWFCNRRQKEKRMT).

This sequence belongs to the POU transcription factor family. Class-3 subfamily.

It is found in the nucleus. Its function is as follows. Acts as a transcription factor. May play a role in neuronal differentiation. This is POU domain, class 3, transcription factor 1 from Xenopus tropicalis (Western clawed frog).